A 684-amino-acid polypeptide reads, in one-letter code: UvrABC system protein C (684 aa).

The GIY-YIG domain occupies 16-95 (TDPGVYKFRD…IKRFDPRFNV (80 aa)). The 36-residue stretch at 208 to 243 (APVRKRVTQRMEEAAENLEFELAARLRDDLGAIDKL) folds into the UVR domain. Residues 332 to 352 (EAAEDAKLERRGVDQESHAEP) are compositionally biased toward basic and acidic residues. Positions 332 to 357 (EAAEDAKLERRGVDQESHAEPRQGNA) are disordered.

This sequence belongs to the UvrC family. Interacts with UvrB in an incision complex.

Its subcellular location is the cytoplasm. Functionally, the UvrABC repair system catalyzes the recognition and processing of DNA lesions. UvrC both incises the 5' and 3' sides of the lesion. The N-terminal half is responsible for the 3' incision and the C-terminal half is responsible for the 5' incision. The polypeptide is UvrABC system protein C (Corynebacterium aurimucosum (strain ATCC 700975 / DSM 44827 / CIP 107346 / CN-1) (Corynebacterium nigricans)).